The following is a 543-amino-acid chain: Chaperonin GroEL 2 (543 aa).

Residues 29–32 (TLGP), 86–90 (DGTTT), glycine 413, 478–480 (NAA), and aspartate 494 each bind ATP.

The protein belongs to the chaperonin (HSP60) family. Forms a cylinder of 14 subunits composed of two heptameric rings stacked back-to-back. Interacts with the co-chaperonin GroES.

It is found in the cytoplasm. The catalysed reaction is ATP + H2O + a folded polypeptide = ADP + phosphate + an unfolded polypeptide.. In terms of biological role, together with its co-chaperonin GroES, plays an essential role in assisting protein folding. The GroEL-GroES system forms a nano-cage that allows encapsulation of the non-native substrate proteins and provides a physical environment optimized to promote and accelerate protein folding. The protein is Chaperonin GroEL 2 of Thermosynechococcus vestitus (strain NIES-2133 / IAM M-273 / BP-1).